We begin with the raw amino-acid sequence, 227 residues long: Endo-1,4-beta-xylanase 2 (227 aa).

The N-terminal stretch at 1–36 (MVSIKSVLAAATAVSSALAAPFDFVPRDNSTALQAR) is a signal peptide. Asn29 carries an N-linked (GlcNAc...) asparagine glycan. The 189-residue stretch at 37-225 (QVTPNAEGWH…SSGESDIYVQ (189 aa)) folds into the GH11 domain. Glu121 acts as the Nucleophile in catalysis. The active-site Proton donor is Glu212.

It belongs to the glycosyl hydrolase 11 (cellulase G) family.

The protein localises to the secreted. The enzyme catalyses Endohydrolysis of (1-&gt;4)-beta-D-xylosidic linkages in xylans.. The protein operates within glycan degradation; xylan degradation. Functionally, endo-1,4-beta-xylanase involved in the hydrolysis of xylan, a major structural heterogeneous polysaccharide found in plant biomass representing the second most abundant polysaccharide in the biosphere, after cellulose. The polypeptide is Endo-1,4-beta-xylanase 2 (xyn2) (Humicola insolens (Soft-rot fungus)).